Consider the following 159-residue polypeptide: Phosphopantetheine adenylyltransferase (159 aa).

Residue His-16 coordinates ATP. 3 residues coordinate substrate: Lys-40, Met-72, and Arg-86. Residues 87–89 (GLR), Glu-97, and 122–128 (YQYLSAS) each bind ATP.

This sequence belongs to the bacterial CoaD family. Homohexamer. It depends on Mg(2+) as a cofactor.

It is found in the cytoplasm. The enzyme catalyses (R)-4'-phosphopantetheine + ATP + H(+) = 3'-dephospho-CoA + diphosphate. Its pathway is cofactor biosynthesis; coenzyme A biosynthesis; CoA from (R)-pantothenate: step 4/5. Its function is as follows. Reversibly transfers an adenylyl group from ATP to 4'-phosphopantetheine, yielding dephospho-CoA (dPCoA) and pyrophosphate. The chain is Phosphopantetheine adenylyltransferase from Dehalococcoides mccartyi (strain ATCC BAA-2266 / KCTC 15142 / 195) (Dehalococcoides ethenogenes (strain 195)).